A 131-amino-acid chain; its full sequence is MSMSDPIADMLTRIRNAQMVEKVSVTMPSSKVKVAIAQVLKDEGYIDDFAVKSEGAKSELNIVLKYYAGRPVIERIERVSKPGLRVYRGRNDIPVVMNGLGVAIVSTPKGVMTDRKARATGVGGEVICYVA.

This sequence belongs to the universal ribosomal protein uS8 family. As to quaternary structure, part of the 30S ribosomal subunit. Contacts proteins S5 and S12.

Its function is as follows. One of the primary rRNA binding proteins, it binds directly to 16S rRNA central domain where it helps coordinate assembly of the platform of the 30S subunit. This chain is Small ribosomal subunit protein uS8, found in Paraburkholderia xenovorans (strain LB400).